The primary structure comprises 434 residues: Transcription initiation factor IIE subunit alpha (434 aa).

Residues 8–99 (VQRLIKMIMR…DFCSTIDSIK (92 aa)) form the HTH TFE/IIEalpha-type domain. The segment at 124 to 151 (CPFCNKKFSSLDVLSLVTNEGTFACNVC) adopts a C4-type zinc-finger fold. 3 disordered regions span residues 217–251 (QQNL…EKRE), 357–408 (STDY…EMQE), and 415–434 (INGF…FEDV). Over residues 226 to 238 (DVRLSTSSPSITV) the composition is skewed to polar residues. 2 stretches are compositionally biased toward basic and acidic residues: residues 241–251 (SADKETDEKRE) and 376–385 (IQNKRTKSIE). The span at 386 to 399 (ENNSLPPIVSTNGI) shows a compositional bias: polar residues. Over residues 419-434 (NEDDEDDEDEADFEDV) the composition is skewed to acidic residues.

The protein belongs to the TFIIE alpha subunit family. In terms of assembly, TFIIE is a tetramer of two alpha (tfa1) and two beta (tfa2) subunits.

Its subcellular location is the nucleus. In terms of biological role, recruits TFIIH to the initiation complex and stimulates the RNA polymerase II C-terminal domain kinase and DNA-dependent ATPase activities of TFIIH. Both TFIIH and TFIIE are required for promoter clearance by RNA polymerase. This is Transcription initiation factor IIE subunit alpha (tfa1) from Schizosaccharomyces pombe (strain 972 / ATCC 24843) (Fission yeast).